Consider the following 469-residue polypeptide: Putative arginine/ornithine antiporter (469 aa).

The next 12 helical transmembrane spans lie at Gly-8 to Leu-28, Ala-44 to Ile-64, Ala-90 to Ile-110, Leu-144 to Ile-164, Val-179 to Gly-199, Ile-213 to Ile-233, Ile-254 to Val-274, Val-301 to Leu-321, Ser-347 to Ile-367, Phe-375 to Ile-395, Asp-417 to Ala-437, and Leu-439 to Val-459.

This sequence belongs to the amino acid-polyamine-organocation (APC) superfamily. Basic amino acid/polyamine antiporter (APA) (TC 2.A.3.2) family.

The protein resides in the cell membrane. It catalyses the reaction L-ornithine(in) + L-arginine(out) = L-ornithine(out) + L-arginine(in). Functionally, catalyzes electroneutral exchange between L-arginine and L-ornithine. The chain is Putative arginine/ornithine antiporter (yvsH) from Bacillus subtilis (strain 168).